Here is a 277-residue protein sequence, read N- to C-terminus: uncharacterized protein (277 aa).

The segment at 256-277 (HTTTTTTSPSFTIPSNSSKGVS) is disordered.

Its function is as follows. This protein may be involved in virus assembly. Essential for virus function. This is an uncharacterized protein from Saccharolobus solfataricus (Sulfolobus solfataricus).